The following is a 297-amino-acid chain: 2-phospho-L-lactate transferase (297 aa).

7,8-didemethyl-8-hydroxy-5-deazariboflavin is bound at residue Asp-49.

The protein belongs to the CofD family. As to quaternary structure, homodimer. It depends on Mg(2+) as a cofactor.

The catalysed reaction is (2S)-lactyl-2-diphospho-5'-guanosine + 7,8-didemethyl-8-hydroxy-5-deazariboflavin = oxidized coenzyme F420-0 + GMP + H(+). Its pathway is cofactor biosynthesis; coenzyme F420 biosynthesis. Catalyzes the transfer of the 2-phospholactate moiety from (2S)-lactyl-2-diphospho-5'-guanosine to 7,8-didemethyl-8-hydroxy-5-deazariboflavin (FO) with the formation of oxidized coenzyme F420-0 and GMP. This is 2-phospho-L-lactate transferase from Methanospirillum hungatei JF-1 (strain ATCC 27890 / DSM 864 / NBRC 100397 / JF-1).